The following is an 837-amino-acid chain: Phenylalanine--tRNA ligase beta subunit (837 aa).

One can recognise a tRNA-binding domain in the interval S39–G149. Residues I415–S520 form the B5 domain. Residues D498, D504, E507, and E508 each contribute to the Mg(2+) site. Positions P743–R836 constitute an FDX-ACB domain.

The protein belongs to the phenylalanyl-tRNA synthetase beta subunit family. Type 1 subfamily. Tetramer of two alpha and two beta subunits. The cofactor is Mg(2+).

The protein localises to the cytoplasm. The enzyme catalyses tRNA(Phe) + L-phenylalanine + ATP = L-phenylalanyl-tRNA(Phe) + AMP + diphosphate + H(+). This chain is Phenylalanine--tRNA ligase beta subunit, found in Prochlorococcus marinus (strain SARG / CCMP1375 / SS120).